Here is an 83-residue protein sequence, read N- to C-terminus: Putative snRNP Sm-like protein (83 aa).

Residues 9–81 form the Sm domain; sequence KPMDVLKNAL…VIFVSPSKGD (73 aa).

It belongs to the snRNP Sm proteins family.

This is Putative snRNP Sm-like protein from Thermoplasma volcanium (strain ATCC 51530 / DSM 4299 / JCM 9571 / NBRC 15438 / GSS1).